The following is a 702-amino-acid chain: Rho GTPase-activating protein 22 (702 aa).

The 109-residue stretch at Pro43–Trp151 folds into the PH domain. A Rho-GAP domain is found at Gln161–Phe355. 4 disordered regions span residues Leu360–Pro433, Ser438–Glu457, Arg480–Thr511, and Pro555–His596. Phosphoserine occurs at positions 365 and 397. Polar residues-rich tracts occupy residues Ser407–Ala421, Ser438–Leu456, Gly491–Pro504, and Ser581–Gln594. A coiled-coil region spans residues Gln594–Leu691.

In terms of assembly, interacts with VEZF1. In terms of tissue distribution, predominantly present in endothelial cells (at protein level).

The protein resides in the cytoplasm. The protein localises to the nucleus. Functionally, rho GTPase-activating protein involved in the signal transduction pathway that regulates endothelial cell capillary tube formation during angiogenesis. Acts as a GTPase activator for the RAC1 by converting it to an inactive GDP-bound state. Inhibits RAC1-dependent lamellipodia formation. May also play a role in transcription regulation via its interaction with VEZF1, by regulating activity of the endothelin-1 (EDN1) promoter. The chain is Rho GTPase-activating protein 22 (Arhgap22) from Mus musculus (Mouse).